Here is a 670-residue protein sequence, read N- to C-terminus: MSAIQLQIANLVNELNQHNIKYYVDDAPSVTDAYYDKLMQQLLALEAEHPELIQSDSPSRRVGGHALDKFSQVTHLKPMLSLDNAFEQADFEAFNKRITDKVGTVDYVCEPKLDGLAVSITYRNGQFERAATRGDGTVGEDITENVRTIKSIPMGLRGDGYPELVEVRGEVFMPKAAFDALNARQQAKGDKTFVNPRNAAAGSLRQLDSKITASRALGFYAYALGVVEGEVQPMEPSHFGQLAQLKRWGLPVSQEVKLCDSLEKVYAYYDDILNRRGQLSYEIDGVVIKVNAIPKQLSLGFVAKAPRWAIAYKFPAQEEMTLLESVDFQVGRTGAVTPVARLQAVFVGGVTVSNATLHNADEIARLGVKIGDTVIIRRAGDVIPQIVAIVPEKRPQDAQNIVFPTHCPVCQSLVERLEGEAVARCSGGLFCEAQRKEAIKHFASRKALNIDGMGDKIVEQLIDKELVQSPADLFGLTASMMTMLERMAMKSATKLVAAIDAAKTTTLARFIYSLGIREVGEATAANLANHFKSLAAVREAGVEQLLEVADVGEIVAKHIRHFFDQAHNLEVVDKLLAAGINWPEITAVAEDELRLKGQTWVLTGTLTQLNRNEAKAQLQALGAKVAGSISKNTDCLVAGEAAGSKLAKAQELGVKVIDETELLVFLGLAG.

NAD(+)-binding positions include 32–36 (DAYYD), 81–82 (SL), and Glu110. The active-site N6-AMP-lysine intermediate is Lys112. NAD(+) is bound by residues Arg133, Glu170, Lys289, and Lys313. Positions 407, 410, 425, and 431 each coordinate Zn(2+). Residues 590 to 670 (EDELRLKGQT…ELLVFLGLAG (81 aa)) form the BRCT domain.

It belongs to the NAD-dependent DNA ligase family. LigA subfamily. It depends on Mg(2+) as a cofactor. The cofactor is Mn(2+).

The enzyme catalyses NAD(+) + (deoxyribonucleotide)n-3'-hydroxyl + 5'-phospho-(deoxyribonucleotide)m = (deoxyribonucleotide)n+m + AMP + beta-nicotinamide D-nucleotide.. Functionally, DNA ligase that catalyzes the formation of phosphodiester linkages between 5'-phosphoryl and 3'-hydroxyl groups in double-stranded DNA using NAD as a coenzyme and as the energy source for the reaction. It is essential for DNA replication and repair of damaged DNA. In Shewanella denitrificans (strain OS217 / ATCC BAA-1090 / DSM 15013), this protein is DNA ligase.